The primary structure comprises 346 residues: Sensor protein kinase GraS (346 aa).

2 helical membrane-spanning segments follow: residues 18–38 (IFWILFLNILMLGISLIDYDF) and 43–63 (LFYIVSLNLSLTLIFLILTFF). The region spanning 126 to 332 (EFVHDIKTPV…TVKLIFPLQN (207 aa)) is the Histidine kinase domain.

Interacts with GraX.

It is found in the cell membrane. It catalyses the reaction ATP + protein L-histidine = ADP + protein N-phospho-L-histidine.. Its function is as follows. Member of the two-component regulatory system GraR/GraS involved in resistance against cationic antimicrobial peptides (CAMPs). Functions as a sensor protein kinase which phosphorylates GraR through the auxiliary protein GraX. In turn, GraR up-regulates many genes such as adhesins, exoproteins, transporters, toxins, and proteins involved in cell wall synthesis. Down-regulates the expression of many genes involved in RNA and amino acid synthesis or glycolysis. This chain is Sensor protein kinase GraS (graS), found in Staphylococcus aureus (strain MRSA252).